The primary structure comprises 186 residues: UPF0303 protein ZMO1353 (186 aa).

It belongs to the UPF0303 family.

The sequence is that of UPF0303 protein ZMO1353 from Zymomonas mobilis subsp. mobilis (strain ATCC 31821 / ZM4 / CP4).